The chain runs to 320 residues: Ferrochelatase (320 aa).

Residues His194 and Glu275 each coordinate Fe cation.

This sequence belongs to the ferrochelatase family. Monomer.

It is found in the cytoplasm. The catalysed reaction is heme b + 2 H(+) = protoporphyrin IX + Fe(2+). Its pathway is porphyrin-containing compound metabolism; protoheme biosynthesis; protoheme from protoporphyrin-IX: step 1/1. Functionally, catalyzes the ferrous insertion into protoporphyrin IX. The polypeptide is Ferrochelatase (Salmonella dublin (strain CT_02021853)).